A 304-amino-acid polypeptide reads, in one-letter code: Mitochondrial glycine transporter (304 aa).

3 Solcar repeats span residues 3 to 82, 106 to 186, and 209 to 293; these read GKSK…VREA, ENLI…LKVA, and SSAM…LVKR. 6 consecutive transmembrane segments (helical) span residues 9–34, 57–83, 108–133, 161–184, 213–239, and 268–286; these read IYAG…TRVQ, GTLP…REAV, LISG…VRYE, GWAA…EQLK, INSV…KTRM, and GLAL…SWCI.

This sequence belongs to the mitochondrial carrier (TC 2.A.29) family. SLC25A38 subfamily.

The protein localises to the mitochondrion inner membrane. It carries out the reaction glycine(in) = glycine(out). Its function is as follows. Mitochondrial glycine transporter that imports glycine into the mitochondrial matrix. Plays an important role in providing glycine for the first enzymatic step in heme biosynthesis, the condensation of glycine with succinyl-CoA to produce 5-aminolevulinate (ALA) in the mitochondrial matrix. This chain is Mitochondrial glycine transporter, found in Yarrowia lipolytica (strain CLIB 122 / E 150) (Yeast).